The sequence spans 129 residues: UPF0325 protein ESA_03178 (129 aa).

Belongs to the UPF0325 family.

This is UPF0325 protein ESA_03178 from Cronobacter sakazakii (strain ATCC BAA-894) (Enterobacter sakazakii).